We begin with the raw amino-acid sequence, 296 residues long: Phosphatidylcholine:diacylglycerol cholinephosphotransferase 2 (296 aa).

A run of 5 helical transmembrane segments spans residues 83–103, 136–156, 165–182, 198–218, and 250–270; these read HWIP…EYTF, VLAA…GCTW, TIAA…GYST, PVGN…SMIA, and GHYT…DSLA. Residues H211, H251, and D255 contribute to the active site.

Belongs to the phosphatidylcholine:diacylglycerol cholinephosphotransferase family.

It is found in the membrane. Functions as a phosphatidylcholine:diacylglycerol cholinephosphotransferase that catalyzes the transfer of the phosphocholine headgroup from phosphatidylcholine (PC) to diacylglycerol, a major reaction for the transfer of 18:1 into phosphatidylcholine for desaturation and also for the reverse transfer of 18:2 and 18:3 into the triacylglycerols synthesis pathway. In Arabidopsis thaliana (Mouse-ear cress), this protein is Phosphatidylcholine:diacylglycerol cholinephosphotransferase 2.